The primary structure comprises 497 residues: Keratin, type II cytoskeletal 8 (497 aa).

The segment at 2-108 is head; it reads TSYQRTVTVR…DPRIGQVRLE (107 aa). Residues 109–149 are coil 1A; it reads EKEQIKTLNNQFAGFIDKVRYLEQQNKLLETKWQLLQNQTT. An IF rod domain is found at 109–421; the sequence is EKEQIKTLNN…KLLEGEESRL (313 aa). Residues 145–162 form a linker 1 region; sequence QNQTTPSRSNLDSMFEAY. The interval 163-254 is coil 1B; it reads ISNLRRQLDT…QIYDEEIREL (92 aa). Residues 255 to 278 are linker 12; that stretch reads QTQIQDTSVIVQMDNNRQLDLDNI. Residues 279 to 417 are coil 2; it reads IAEVRAQYED…ATYRKLLEGE (139 aa). The interval 418 to 497 is tail; sequence ESRLASGIQA…VSERSNIVKE (80 aa).

It belongs to the intermediate filament family. As to quaternary structure, heterotetramer of two type I and two type II keratins. Keratin-8 associates with keratin-18. In terms of tissue distribution, expressed in skin.

Its subcellular location is the cytoplasm. The protein localises to the nucleus. The protein resides in the nucleoplasm. It is found in the nucleus matrix. Functionally, together with KRT19, helps to link the contractile apparatus to dystrophin at the costameres of striated muscle. The sequence is that of Keratin, type II cytoskeletal 8 from Protopterus aethiopicus (Marbled lungfish).